A 497-amino-acid chain; its full sequence is Galactose/methyl galactoside import ATP-binding protein MglA (497 aa).

ABC transporter domains follow at residues 6 to 241 (LEIK…VGRS) and 252 to 497 (VPGE…AKYL). 38 to 45 (GENGAGKS) lines the ATP pocket.

The protein belongs to the ABC transporter superfamily. Galactose/methyl galactoside importer (TC 3.A.1.2.3) family. As to quaternary structure, the complex is composed of one ATP-binding protein (MglA), two transmembrane proteins (MglC) and a solute-binding protein (MglB).

It is found in the cell inner membrane. It carries out the reaction D-galactose(out) + ATP + H2O = D-galactose(in) + ADP + phosphate + H(+). The catalysed reaction is methyl beta-D-galactoside(out) + ATP + H2O = methyl beta-D-galactoside(in) + ADP + phosphate + H(+). Functionally, part of the ABC transporter complex MglABC involved in galactose/methyl galactoside import. Responsible for energy coupling to the transport system. This Treponema denticola (strain ATCC 35405 / DSM 14222 / CIP 103919 / JCM 8153 / KCTC 15104) protein is Galactose/methyl galactoside import ATP-binding protein MglA.